An 82-amino-acid chain; its full sequence is Putative ribonuclease VapC34 (82 aa).

Aspartate 4 lines the Mg(2+) pocket.

Belongs to the PINc/VapC protein family. The cofactor is Mg(2+).

Functionally, toxic component of a possible type II toxin-antitoxin (TA) system. A putative RNase. Its cognate antitoxin is VapB34. The sequence is that of Putative ribonuclease VapC34 (vapC34) from Mycobacterium tuberculosis (strain CDC 1551 / Oshkosh).